The chain runs to 94 residues: PqqA binding protein (94 aa).

It belongs to the PqqD family. As to quaternary structure, monomer. Interacts with PqqE.

The protein operates within cofactor biosynthesis; pyrroloquinoline quinone biosynthesis. Its function is as follows. Functions as a PqqA binding protein and presents PqqA to PqqE, in the pyrroloquinoline quinone (PQQ) biosynthetic pathway. This is PqqA binding protein from Pseudomonas syringae pv. syringae (strain B728a).